A 241-amino-acid polypeptide reads, in one-letter code: NADPH-dependent FMN reductase ArsH (241 aa).

Position 43–50 (43–50) interacts with FMN; sequence SLRTVSYS.

It belongs to the ArsH family. As to quaternary structure, homotetramer. The cofactor is FMN.

In terms of biological role, has NADPH-dependent FMN reductase activity. No activity with NADH. May play a role in resistance to heavy metal toxicity. This chain is NADPH-dependent FMN reductase ArsH, found in Rhizobium meliloti (strain 1021) (Ensifer meliloti).